We begin with the raw amino-acid sequence, 4377 residues long: E3 ubiquitin-protein ligase HUWE1 (4377 aa).

Residues S648 and S649 each carry the phosphoserine modification. 3 disordered regions span residues 706 to 758, 978 to 1001, and 1018 to 1038; these read KADG…VVGT, DEKA…AGSM, and TLAP…KSKI. Residues 725-735 are compositionally biased toward acidic residues; sequence ASSEDEEEEEV. Polar residues predominate over residues 737 to 756; the sequence is AMQSFNSAQQNETEPNQQVV. S740 is subject to Phosphoserine. S1084 carries the phosphoserine modification. The segment covering 1291–1302 has biased composition (basic and acidic residues); it reads LSKEKEGSRGEE. The interval 1291–1320 is disordered; the sequence is LSKEKEGSRGEEEAGQEEGGSRREPQVNQQ. Residues 1316-1355 form the UBA domain; it reads QVNQQQLQQLMDMGFTREHAMEALLNTSTMEQATEYLLTH. Phosphoserine occurs at positions 1368, 1370, 1382, and 1395. Residues 1370–1389 enclose the UIM domain; it reads SEEDQMMRAIAMSLGQDIPM. The disordered stretch occupies residues 1396-1415; sequence PEEVACRKEEEERKAREKQE. Residues 1603–1680 enclose the WWE domain; the sequence is RAQMTKYLQS…ETGNRRPVML (78 aa). The tract at residues 1690–1733 is disordered; the sequence is KNSKSSNGQELEKTLEESKETDIKHKENKGNDIPLALESTNTEK. The span at 1699–1719 shows a compositional bias: basic and acidic residues; that stretch reads ELEKTLEESKETDIKHKENKG. Position 1907 is a phosphoserine (S1907). Disordered regions lie at residues 2019–2065, 2262–2343, and 2355–2479; these read APAE…SKPL, SLFG…QEMQ, and LLER…ASPL. A compositionally biased stretch (polar residues) spans 2022 to 2033; it reads ETSTTGTSQGEA. T2035 carries the post-translational modification Phosphothreonine. Residues 2037-2057 show a composition bias toward basic and acidic residues; the sequence is EETREGKKDKEGDRTSEEGKQ. Low complexity-rich tracts occupy residues 2262–2271 and 2278–2291; these read SLFGSKSASS and DAQG…SHQQ. S2266 is modified (phosphoserine). Position 2267 is an N6-acetyllysine (K2267). 2 stretches are compositionally biased toward acidic residues: residues 2295–2306 and 2314–2325; these read EPGEAEVQEEDH and ADGDIMDGEAET. Phosphoserine occurs at positions 2362, 2365, and 2391. Positions 2388-2398 are enriched in polar residues; it reads SNLSQASTLQA. A compositionally biased stretch (acidic residues) spans 2408–2472; sequence DPEDEEEHTQ…SEMELDEDYP (65 aa). S2527, S2532, and S2535 each carry phosphoserine. T2554 carries the phosphothreonine modification. Phosphoserine occurs at positions 2584, 2595, and 2619. Positions 2704-2716 are enriched in basic and acidic residues; it reads IIDKGKEDKENRD. Disordered regions lie at residues 2704-2970, 2991-3012, and 3036-3059; these read IIDK…GVDP, IRPP…VGNP, and QQRA…MDPV. The span at 2717-2736 shows a compositional bias: polar residues; sequence QSAQCTVTKTNDSTEQNVSD. Positions 2738-2756 are enriched in low complexity; it reads TPMPDSYPTTPSSTDAPTS. T2751 carries the post-translational modification Phosphothreonine. Composition is skewed to polar residues over residues 2818 to 2835, 2847 to 2864, and 2877 to 2890; these read AETT…TSLS, AVSS…SLAS, and AGSS…SSTP. Phosphoserine is present on residues S2826, S2833, S2835, S2861, S2887, and S2888. A Phosphothreonine modification is found at T2889. 2 stretches are compositionally biased toward low complexity: residues 2913 to 2932 and 2993 to 3007; these read PPED…RDSA and PPTR…SAPA. Position 2918 is a phosphoserine (S2918). A phosphoserine mark is found at S3116, S3117, S3122, S3127, and S3135. At R3149 the chain carries Omega-N-methylarginine. Disordered regions lie at residues 3243 to 3266, 3352 to 3383, 3405 to 3429, 3471 to 3514, and 3539 to 3566; these read PKLS…SHEN, TQQR…SSSS, GKNS…SLEA, SEVQ…TTPV, and TPTT…EGGS. Residues 3355–3369 show a composition bias toward basic and acidic residues; the sequence is RTKETNCESDRERGS. The span at 3370 to 3383 shows a compositional bias: low complexity; it reads KQACSPCSSQSSSS. Composition is skewed to low complexity over residues 3475 to 3503 and 3539 to 3552; these read TNSS…ATAP and TPTT…TSTT. Residues S3557, S3663, S3753, S3758, S3760, and S3761 each carry the phosphoserine modification. The tract at residues 3738–3759 is disordered; it reads TRRANKKAKQTGRLGSSGLGSA. Positions 3749–3759 are enriched in low complexity; the sequence is GRLGSSGLGSA. 2 disordered regions span residues 3782–3850 and 3897–3951; these read EGQR…LPLL and RESK…SSSL. Positions 3794-3803 are enriched in polar residues; it reads TSESSNQSET. Residues S3810, S3818, and S3830 each carry the phosphoserine modification. A compositionally biased stretch (polar residues) spans 3817 to 3828; sequence PSPSAQDTQSIV. The residue at position 3833 (T3833) is a Phosphothreonine. Basic and acidic residues-rich tracts occupy residues 3836 to 3845 and 3897 to 3918; these read GEKEKEEKPP and RESK…KDEP. Residues S3909 and S3922 each carry the phosphoserine modification. A compositionally biased stretch (pro residues) spans 3919-3928; that stretch reads PPLSPAPLTP. Phosphothreonine is present on residues T3927 and T3930. A compositionally biased stretch (polar residues) spans 3941 to 3951; the sequence is EPSSMHISSSL. An HECT domain is found at 4041–4377; the sequence is SPEEMKNRLY…QECSEGFGLA (337 aa). A Phosphotyrosine modification is found at Y4274. The active-site Glycyl thioester intermediate is the C4344.

This sequence belongs to the UPL family. TOM1/PTR1 subfamily. As to quaternary structure, interacts with isoform p19ARF of CDKN2A which strongly inhibits HUWE1 ubiquitin ligase activity. Interacts with MYCN, POLB and CDC6. Interacts with PA2G4. Interacts with NR1D1. Interacts with AMBRA1. Interacts with HAPSTR1. Interacts with HAPSTR2. In hepatocytes, interacts with PAQR3; the interaction promotes PPARA poylubiquitination and STUB1-mediated degradation. In terms of processing, phosphorylated on tyrosine; phosphorylation is probably required for its ability to inhibit TP53 transactivation. Widely expressed.

The protein localises to the cytoplasm. The protein resides in the nucleus. It localises to the mitochondrion. It catalyses the reaction S-ubiquitinyl-[E2 ubiquitin-conjugating enzyme]-L-cysteine + [acceptor protein]-L-lysine = [E2 ubiquitin-conjugating enzyme]-L-cysteine + N(6)-ubiquitinyl-[acceptor protein]-L-lysine.. The protein operates within protein modification; protein ubiquitination. E3 ubiquitin-protein ligase which mediates ubiquitination and subsequent proteasomal degradation of target proteins. Regulates apoptosis by catalyzing the polyubiquitination and degradation of MCL1. Mediates monoubiquitination of DNA polymerase beta (POLB) at 'Lys-41', 'Lys-61' and 'Lys-81', thereby playing a role in base-excision repair. Also ubiquitinates the p53/TP53 tumor suppressor and core histones including H1, H2A, H2B, H3 and H4. Ubiquitinates MFN2 to negatively regulate mitochondrial fusion in response to decreased stearoylation of TFRC. Ubiquitination of MFN2 also takes place following induction of mitophagy; AMBRA1 acts as a cofactor for HUWE1-mediated ubiquitination. Regulates neural differentiation and proliferation by catalyzing the polyubiquitination and degradation of MYCN. May regulate abundance of CDC6 after DNA damage by polyubiquitinating and targeting CDC6 to degradation. Mediates polyubiquitination of PA2G4. Acts in concert with MYCBP2 to regulate the circadian clock gene expression by promoting the lithium-induced ubiquination and degradation of NR1D1. Binds to an upstream initiator-like sequence in the preprodynorphin gene. Mediates HAPSTR1 degradation, but is also a required cofactor in the pathway by which HAPSTR1 governs stress signaling. Acts as a regulator of the JNK and NF-kappa-B signaling pathways by mediating assembly of heterotypic 'Lys-63'-/'Lys-48'-linked branched ubiquitin chains that are then recognized by TAB2: HUWE1 mediates branching of 'Lys-48'-linked chains of substrates initially modified with 'Lys-63'-linked conjugates by TRAF6. 'Lys-63'-/'Lys-48'-linked branched ubiquitin chains protect 'Lys-63'-linkages from CYLD deubiquitination. Ubiquitinates PPARA in hepatocytes. The polypeptide is E3 ubiquitin-protein ligase HUWE1 (Huwe1) (Mus musculus (Mouse)).